The chain runs to 364 residues: Programmed cell death protein 2-like (364 aa).

Position 2 is an N-acetylalanine (alanine 2). The disordered stretch occupies residues 125–150 (EGSQDWGSDTEETPPPPASDLGSDSN).

In terms of biological role, over-expression suppresses AP1, CREB, NFAT, and NF-kB transcriptional activation, and delays cell cycle progression at S phase. The chain is Programmed cell death protein 2-like (Pdcd2l) from Mus musculus (Mouse).